The chain runs to 516 residues: Flagellar radial spoke protein 3 (516 aa).

Composition is skewed to polar residues over residues 1–11 (MVQAKAQQQLY) and 62–74 (ATQTQTKGPSPAS). Disordered stretches follow at residues 1-32 (MVQAKAQQQLYTHAAEPKAVQQRRAKYREDET), 60-90 (ADATQTQTKGPSPASTKKRTTRTLPPRTPEA), 388-412 (NAKWEADKAEAAEKARAEAEAAAEE), and 424-447 (AAAEAEERGEEPPAEPPSLPDGVE). Residues 391–412 (WEADKAEAAEKARAEAEAAAEE) are compositionally biased toward basic and acidic residues.

This sequence belongs to the flagellar radial spoke RSP3 family. As to quaternary structure, interacts with FAP91. In terms of processing, protein 3 is one of the 5 radial spoke proteins that are phosphorylated. Protein 3a might only differ from protein 3 in being unphosphorylated.

The protein localises to the cytoplasm. The protein resides in the cytoskeleton. It localises to the flagellum axoneme. Functionally, protein 3 may attach the radial spoke to the outer doublet microtubule or is required to form a stable spoke structure. In terms of biological role, flagellar radial spokes contribute to the regulation of dynein arm activity and thus the pattern of flagellar bending. They consist of a thin stalk, which is attached to the a subfiber of the outer doublet microtubule, and a bulbous head, which is attached to the stalk and appears to interact with the projections from the central pair of microtubules. This is Flagellar radial spoke protein 3 from Chlamydomonas reinhardtii (Chlamydomonas smithii).